Consider the following 252-residue polypeptide: MVIKCAFKECRPYLNELETRFGLAHWADQSSGFSLHYDDTGLSLYKTDEPKLGAISVDFVTGAAAHRRKFGGGKGQAIAKAVGLNKGATPIVLDATAGLGRDGFVLASLGCKVILHERHPVVAALLYDGLQRAYNDIEIGPWMQQNMSLIFGSSHTLLAQCESMPDVVYLDPMFPHREKSALVKKEMRVFQDLVGADTDADDLLEFAYPLASKRVVVKRPDYAPFLNDKTPSMQIKTKKNRFDVYVKAAMKK.

Residues 101-102, 117-118, 153-154, and D171 each bind S-adenosyl-L-methionine; these read RD, ER, and SS.

It belongs to the methyltransferase superfamily. RsmJ family.

The protein localises to the cytoplasm. It catalyses the reaction guanosine(1516) in 16S rRNA + S-adenosyl-L-methionine = N(2)-methylguanosine(1516) in 16S rRNA + S-adenosyl-L-homocysteine + H(+). Its function is as follows. Specifically methylates the guanosine in position 1516 of 16S rRNA. In Pseudoalteromonas translucida (strain TAC 125), this protein is Ribosomal RNA small subunit methyltransferase J.